Here is a 73-residue protein sequence, read N- to C-terminus: Putative beta-defensin 108A (73 aa).

The N-terminal stretch at 1 to 22 (MRIAVLFFTIFFFMSQVLPAKG) is a signal peptide. 3 disulfides stabilise this stretch: Cys28–Cys55, Cys35–Cys49, and Cys39–Cys56.

It belongs to the beta-defensin family.

It is found in the secreted. Its function is as follows. Has antibacterial activity. In Homo sapiens (Human), this protein is Putative beta-defensin 108A.